The sequence spans 331 residues: Zinc finger CW-type PWWP domain protein 2 homolog (331 aa).

Residues Glu-9–Pro-64 form a CW-type zinc finger. The Zn(2+) site is built by Cys-18, Cys-23, Cys-45, and Cys-56. Positions Leu-83–Thr-147 constitute a PWWP domain. Positions Ile-264–Tyr-295 are disordered. The span at Gly-276 to Gln-293 shows a compositional bias: polar residues.

Its function is as follows. Histone methylation reader which binds to non-methylated (H3K4me0), monomethylated (H3K4me1), dimethylated (H3K4me2) and trimethylated (H3K4me3) 'Lys-4' on histone H3. The order of binding preference is H3K4me3 &gt; H3K4me2 &gt; H3K4me1 &gt; H3K4me0. The chain is Zinc finger CW-type PWWP domain protein 2 homolog (Zcwpw2) from Mus musculus (Mouse).